We begin with the raw amino-acid sequence, 243 residues long: Juxtaposed with another zinc finger protein 1 (243 aa).

The C2H2-type 1 zinc-finger motif lies at 12-37; it reads NTCRFGGCGLHFPTLADLIEHIEDNH. The tract at residues 39–79 is required for interaction with NR2C2; it reads DTDPRVLEKQELQQPTYVALSYINRFMTDAARREQESLKKK. Positions 89–108 are enriched in polar residues; it reads SSSVSRGNVSTPPRHSSGSL. A disordered region spans residues 89 to 151; it reads SSSVSRGNVS…SDSDESWTTE (63 aa). Residues Thr109 and Thr113 each carry the phosphothreonine modification. Over residues 118–130 the composition is skewed to low complexity; that stretch reads PSSSFRSSTPTGS. The span at 131-148 shows a compositional bias: acidic residues; sequence EYDEEEVDYEESDSDESW. The segment at 173-198 adopts a C2H2-type 2 zinc-finger fold; the sequence is FACPVPGCKKRYKNVNGIKYHAKNGH. The segment at 208–230 adopts a C2H2-type 3; degenerate zinc-finger fold; that stretch reads FKCRCGKSYKTAQGLRHHTINFH.

In terms of assembly, interacts with NR2C2 (via ligand-binding region). Expressed in range of tissues with highest expression levels in testis, liver, muscle and fat and lowest levels in kidney. Detected in liver and white adipose tissue (at protein level).

The protein resides in the nucleus. Functionally, acts as a transcriptional corepressor of orphan nuclear receptor NR2C2. Inhibits expression of the gluconeogenesis enzyme PCK2 through inhibition of NR2C2 activity. Also involved in transcriptional activation of NAMPT by promoting expression of PPARA and PPARD. Plays a role in lipid metabolism by suppressing lipogenesis, increasing lipolysis and decreasing lipid accumulation in adipose tissue. Plays a role in glucose homeostasis by improving glucose metabolism and insulin sensitivity. The sequence is that of Juxtaposed with another zinc finger protein 1 (Jazf1) from Mus musculus (Mouse).